The primary structure comprises 143 residues: Large ribosomal subunit protein uL15 (143 aa).

The interval Met-1–Gly-52 is disordered. Positions Arg-21–Ala-31 are enriched in gly residues.

Belongs to the universal ribosomal protein uL15 family. As to quaternary structure, part of the 50S ribosomal subunit.

Functionally, binds to the 23S rRNA. The chain is Large ribosomal subunit protein uL15 from Herminiimonas arsenicoxydans.